Consider the following 516-residue polypeptide: Cytochrome P450 1A1 (516 aa).

Positions Phe-25–Pro-36 are mitochondrial targeting signal. Ser-63 carries O-linked (GlcNAc) serine glycosylation. A substrate-binding site is contributed by Phe-220. Cys-453 lines the heme pocket.

Belongs to the cytochrome P450 family. Interacts with cytosolic chaperones HSP70 and HSP90; this interaction is required for initial targeting to mitochondria. Interacts (via mitochondrial targeting signal) with TOMM40 (via N-terminus); this interaction is required for translocation across the mitochondrial outer membrane. Heme is required as a cofactor. As to expression, constitutively expressed in liver.

Its subcellular location is the endoplasmic reticulum membrane. The protein localises to the mitochondrion inner membrane. The protein resides in the microsome membrane. It is found in the cytoplasm. The catalysed reaction is an organic molecule + reduced [NADPH--hemoprotein reductase] + O2 = an alcohol + oxidized [NADPH--hemoprotein reductase] + H2O + H(+). The enzyme catalyses estrone + reduced [NADPH--hemoprotein reductase] + O2 = 2-hydroxyestrone + oxidized [NADPH--hemoprotein reductase] + H2O + H(+). It catalyses the reaction estrone + reduced [NADPH--hemoprotein reductase] + O2 = 4-hydroxyestrone + oxidized [NADPH--hemoprotein reductase] + H2O + H(+). It carries out the reaction estrone + reduced [NADPH--hemoprotein reductase] + O2 = 6alpha-hydroxyestrone + oxidized [NADPH--hemoprotein reductase] + H2O + H(+). The catalysed reaction is estrone + reduced [NADPH--hemoprotein reductase] + O2 = 15alpha-hydroxyestrone + oxidized [NADPH--hemoprotein reductase] + H2O + H(+). The enzyme catalyses estrone + reduced [NADPH--hemoprotein reductase] + O2 = 16alpha-hydroxyestrone + oxidized [NADPH--hemoprotein reductase] + H2O + H(+). It catalyses the reaction 17beta-estradiol + reduced [NADPH--hemoprotein reductase] + O2 = 2-hydroxy-17beta-estradiol + oxidized [NADPH--hemoprotein reductase] + H2O + H(+). It carries out the reaction 17beta-estradiol + reduced [NADPH--hemoprotein reductase] + O2 = 4-hydroxy-17beta-estradiol + oxidized [NADPH--hemoprotein reductase] + H2O + H(+). The catalysed reaction is 17beta-estradiol + reduced [NADPH--hemoprotein reductase] + O2 = 6alpha-hydroxy-17beta-estradiol + oxidized [NADPH--hemoprotein reductase] + H2O + H(+). The enzyme catalyses 17beta-estradiol + reduced [NADPH--hemoprotein reductase] + O2 = 7alpha-hydroxy-17beta-estradiol + oxidized [NADPH--hemoprotein reductase] + H2O + H(+). It catalyses the reaction 17beta-estradiol + reduced [NADPH--hemoprotein reductase] + O2 = 15alpha-hydroxy-17beta-estradiol + oxidized [NADPH--hemoprotein reductase] + H2O + H(+). It carries out the reaction (5Z,8Z,11Z)-eicosatrienoate + reduced [NADPH--hemoprotein reductase] + O2 = 19-hydroxy-(5Z,8Z,11Z)-eicosatrienoate + oxidized [NADPH--hemoprotein reductase] + H2O + H(+). The catalysed reaction is (5Z,8Z,11Z,14Z)-eicosatetraenoate + reduced [NADPH--hemoprotein reductase] + O2 = 16-hydroxy-(5Z,8Z,11Z,14Z)-eicosatetraenoate + oxidized [NADPH--hemoprotein reductase] + H2O + H(+). The enzyme catalyses (5Z,8Z,11Z,14Z)-eicosatetraenoate + reduced [NADPH--hemoprotein reductase] + O2 = 17-hydroxy-(5Z,8Z,11Z,14Z)-eicosatetraenoate + oxidized [NADPH--hemoprotein reductase] + H2O + H(+). It catalyses the reaction (5Z,8Z,11Z,14Z)-eicosatetraenoate + reduced [NADPH--hemoprotein reductase] + O2 = 18-hydroxy-(5Z,8Z,11Z,14Z)-eicosatetraenoate + oxidized [NADPH--hemoprotein reductase] + H2O + H(+). It carries out the reaction (5Z,8Z,11Z,14Z)-eicosatetraenoate + reduced [NADPH--hemoprotein reductase] + O2 = 19-hydroxy-(5Z,8Z,11Z,14Z)-eicosatetraenoate + oxidized [NADPH--hemoprotein reductase] + H2O + H(+). The catalysed reaction is (5Z,8Z,11Z,14Z,17Z)-eicosapentaenoate + reduced [NADPH--hemoprotein reductase] + O2 = 19-hydroxy-(5Z,8Z,11Z,14Z,17Z)-eicosapentaenoate + oxidized [NADPH--hemoprotein reductase] + H2O + H(+). The enzyme catalyses (5Z,8Z,11Z,14Z)-eicosatetraenoate + reduced [NADPH--hemoprotein reductase] + O2 = (8R,9S)-epoxy-(5Z,11Z,14Z)-eicosatrienoate + oxidized [NADPH--hemoprotein reductase] + H2O + H(+). It catalyses the reaction (5Z,8Z,11Z,14Z)-eicosatetraenoate + reduced [NADPH--hemoprotein reductase] + O2 = (11R,12S)-epoxy-(5Z,8Z,14Z)-eicosatrienoate + oxidized [NADPH--hemoprotein reductase] + H2O + H(+). It carries out the reaction (5Z,8Z,11Z,14Z)-eicosatetraenoate + reduced [NADPH--hemoprotein reductase] + O2 = (14S,15R)-epoxy-(5Z,8Z,11Z)-eicosatrienoate + oxidized [NADPH--hemoprotein reductase] + H2O + H(+). The catalysed reaction is (5Z,8Z,11Z,14Z)-eicosatetraenoate + reduced [NADPH--hemoprotein reductase] + O2 = (14R,15S)-epoxy-(5Z,8Z,11Z)-eicosatrienoate + oxidized [NADPH--hemoprotein reductase] + H2O + H(+). The enzyme catalyses (5Z,8Z,11Z,14Z,17Z)-eicosapentaenoate + reduced [NADPH--hemoprotein reductase] + O2 = (17R,18S)-epoxy-(5Z,8Z,11Z,14Z)-eicosatetraenoate + oxidized [NADPH--hemoprotein reductase] + H2O + H(+). It catalyses the reaction (4Z,7Z,10Z,13Z,16Z,19Z)-docosahexaenoate + reduced [NADPH--hemoprotein reductase] + O2 = (19S,20R)-epoxy-(4Z,7Z,10Z,13Z,16Z)-docosapentaenoate + oxidized [NADPH--hemoprotein reductase] + H2O + H(+). It carries out the reaction (4Z,7Z,10Z,13Z,16Z,19Z)-docosahexaenoate + reduced [NADPH--hemoprotein reductase] + O2 = (19R,20S)-epoxy-(4Z,7Z,10Z,13Z,16Z)-docosapentaenoate + oxidized [NADPH--hemoprotein reductase] + H2O + H(+). The catalysed reaction is all-trans-retinol + reduced [NADPH--hemoprotein reductase] + O2 = all-trans-retinal + oxidized [NADPH--hemoprotein reductase] + 2 H2O + H(+). The enzyme catalyses all-trans-retinal + reduced [NADPH--hemoprotein reductase] + O2 = all-trans-retinoate + oxidized [NADPH--hemoprotein reductase] + H2O + 2 H(+). It catalyses the reaction (13S)-hydroperoxy-(9Z,11E)-octadecadienoate = 13-oxo-(9Z,11E)-octadecadienoate + H2O. It carries out the reaction (12S)-hydroperoxy-(5Z,8Z,10E,14Z)-eicosatetraenoate = 12-oxo-(5Z,8Z,10E,14Z)-eicosatetraenoate + H2O. The catalysed reaction is (15S)-hydroperoxy-(5Z,8Z,11Z,13E)-eicosatetraenoate = 15-oxo-(5Z,8Z,11Z,13E)-eicosatetraenoate + H2O. The enzyme catalyses (5S)-hydroperoxy-(6E,8Z,11Z,14Z)-eicosatetraenoate = 5-oxo-(6E,8Z,11Z,14Z)-eicosatetraenoate + H2O. It participates in steroid hormone biosynthesis. The protein operates within lipid metabolism; fatty acid metabolism. Its pathway is cofactor metabolism; retinol metabolism. A cytochrome P450 monooxygenase involved in the metabolism of various endogenous substrates, including fatty acids, steroid hormones and vitamins. Mechanistically, uses molecular oxygen inserting one oxygen atom into a substrate, and reducing the second into a water molecule, with two electrons provided by NADPH via cytochrome P450 reductase (CPR; NADPH-ferrihemoprotein reductase). Catalyzes the hydroxylation of carbon-hydrogen bonds. Exhibits high catalytic activity for the formation of hydroxyestrogens from estrone (E1) and 17beta-estradiol (E2), namely 2-hydroxy E1 and E2, as well as D-ring hydroxylated E1 and E2 at the C15alpha and C16alpha positions. Displays different regioselectivities for polyunsaturated fatty acids (PUFA) hydroxylation. Catalyzes the epoxidation of double bonds of certain PUFA. Converts arachidonic acid toward epoxyeicosatrienoic acid (EET) regioisomers, 8,9-, 11,12-, and 14,15-EET, that function as lipid mediators in the vascular system. Displays an absolute stereoselectivity in the epoxidation of eicosapentaenoic acid (EPA) producing the 17(R),18(S) enantiomer. May play an important role in all-trans retinoic acid biosynthesis in extrahepatic tissues. Catalyzes two successive oxidative transformation of all-trans retinol to all-trans retinal and then to the active form all-trans retinoic acid. May also participate in eicosanoids metabolism by converting hydroperoxide species into oxo metabolites (lipoxygenase-like reaction, NADPH-independent). The protein is Cytochrome P450 1A1 (CYP1A1) of Cavia porcellus (Guinea pig).